We begin with the raw amino-acid sequence, 250 residues long: tRNA (guanine-N(1)-)-methyltransferase (250 aa).

S-adenosyl-L-methionine-binding positions include Gly-112 and 132–137 (IGDFVL).

This sequence belongs to the RNA methyltransferase TrmD family. Homodimer.

The protein localises to the cytoplasm. The enzyme catalyses guanosine(37) in tRNA + S-adenosyl-L-methionine = N(1)-methylguanosine(37) in tRNA + S-adenosyl-L-homocysteine + H(+). Functionally, specifically methylates guanosine-37 in various tRNAs. In Marinomonas sp. (strain MWYL1), this protein is tRNA (guanine-N(1)-)-methyltransferase.